Consider the following 155-residue polypeptide: Small ribosomal subunit protein uS7cz/uS7cy (155 aa).

Belongs to the universal ribosomal protein uS7 family. Part of the 30S ribosomal subunit.

It is found in the plastid. The protein resides in the chloroplast. One of the primary rRNA binding proteins, it binds directly to 16S rRNA where it nucleates assembly of the head domain of the 30S subunit. This Ipomoea purpurea (Common morning glory) protein is Small ribosomal subunit protein uS7cz/uS7cy (rps7-A).